Here is a 373-residue protein sequence, read N- to C-terminus: MTAPNHPPGRTRVAVVYGGRSSEHAISCVSAGSILRNLDPERFEVVAIGITPDGSWVLTDGRPETLAITDGKLPAVTEASGTELALPAAPNRSGQLLALGNGPGEILAAVDVVFPVLHGPYGEDGTIQGLLELAGVPYVGSGVLASAAGMDKEYTKKLLAAEGLPIGDQVVLRPGVETLDLEQRERLGLPVFVKPARGGSSIGVSRVTAWDELPAAVALARRHDPKVIVEAAVIGRELECGVLEFPDGRLEASTVGEIRVAGVRGREDGFYDFATKYLEDAAELDVPAKVDDDVADEIRQLAVRAFTAIGCQGLARVDFFLTDDGPVINEINTMPGFTTISMYPRMWAAGGIDYPTLLAAMVDTAIARGTGLR.

An ATP-grasp domain is found at 156–363; that stretch reads KKLLAAEGLP…YPTLLAAMVD (208 aa). Residue 184-239 participates in ATP binding; it reads RERLGLPVFVKPARGGSSIGVSRVTAWDELPAAVALARRHDPKVIVEAAVIGRELE. Mg(2+) is bound by residues aspartate 318, glutamate 330, and asparagine 332.

Belongs to the D-alanine--D-alanine ligase family. Requires Mg(2+) as cofactor. Mn(2+) serves as cofactor.

It is found in the cytoplasm. The catalysed reaction is 2 D-alanine + ATP = D-alanyl-D-alanine + ADP + phosphate + H(+). The protein operates within cell wall biogenesis; peptidoglycan biosynthesis. In terms of biological role, cell wall formation. This is D-alanine--D-alanine ligase from Mycolicibacterium smegmatis (strain ATCC 700084 / mc(2)155) (Mycobacterium smegmatis).